Here is a 225-residue protein sequence, read N- to C-terminus: Glutathione S-transferase A (225 aa).

The GST N-terminal domain maps to 3–85; that stretch reads KDMTLLWGSG…YLESQFKSQG (83 aa). Arginine 18 provides a ligand contact to glutathione. The GST C-terminal domain maps to 92–217; it reads CPAEQAMMYQ…WPPTWLESPQ (126 aa).

The protein belongs to the GST superfamily. Theta family. Homodimer. Found in all the tissues examined. Highest values found in liver and in intestinal mucosa.

The protein resides in the cytoplasm. The catalysed reaction is RX + glutathione = an S-substituted glutathione + a halide anion + H(+). Functionally, conjugation of reduced glutathione to a wide number of exogenous and endogenous hydrophobic electrophiles. This Pleuronectes platessa (European plaice) protein is Glutathione S-transferase A.